Reading from the N-terminus, the 147-residue chain is Large ribosomal subunit protein uL13 (147 aa).

This sequence belongs to the universal ribosomal protein uL13 family. As to quaternary structure, part of the 50S ribosomal subunit.

In terms of biological role, this protein is one of the early assembly proteins of the 50S ribosomal subunit, although it is not seen to bind rRNA by itself. It is important during the early stages of 50S assembly. This chain is Large ribosomal subunit protein uL13, found in Polaromonas naphthalenivorans (strain CJ2).